Consider the following 203-residue polypeptide: Glycerol-3-phosphate acyltransferase (203 aa).

Helical transmembrane passes span 3 to 23 (ILLATVAAYLIGSVSFAVVVS), 51 to 71 (KAAILTLVGDAFKGWLAVWLV), 74 to 94 (FGIGGEIGVALAAIAVFLGHL), 116 to 136 (AVHPVLGLATALTWLIVAFFF), 140 to 160 (SLAALVAAVFAPIFDVFLFGT), and 164 to 178 (PVAWAVLAMSVLLIW).

It belongs to the PlsY family. In terms of assembly, probably interacts with PlsX.

Its subcellular location is the cell inner membrane. The catalysed reaction is an acyl phosphate + sn-glycerol 3-phosphate = a 1-acyl-sn-glycero-3-phosphate + phosphate. Its pathway is lipid metabolism; phospholipid metabolism. Its function is as follows. Catalyzes the transfer of an acyl group from acyl-phosphate (acyl-PO(4)) to glycerol-3-phosphate (G3P) to form lysophosphatidic acid (LPA). This enzyme utilizes acyl-phosphate as fatty acyl donor, but not acyl-CoA or acyl-ACP. This chain is Glycerol-3-phosphate acyltransferase, found in Burkholderia pseudomallei (strain K96243).